Reading from the N-terminus, the 335-residue chain is 7,8-didemethyl-8-hydroxy-5-deazariboflavin synthase (335 aa).

In terms of domain architecture, Radical SAM core spans 1–246 (MTYSKNVFIP…QVAPNLIDPK (246 aa)). Positions 15, 19, and 22 each coordinate [4Fe-4S] cluster.

This sequence belongs to the radical SAM superfamily. CofG family. In terms of assembly, consists of two subunits, CofG and CofH. It depends on [4Fe-4S] cluster as a cofactor.

It catalyses the reaction 5-amino-5-(4-hydroxybenzyl)-6-(D-ribitylimino)-5,6-dihydrouracil + S-adenosyl-L-methionine = 7,8-didemethyl-8-hydroxy-5-deazariboflavin + 5'-deoxyadenosine + L-methionine + NH4(+) + H(+). It functions in the pathway cofactor biosynthesis; coenzyme F0 biosynthesis. Catalyzes the radical-mediated synthesis of 7,8-didemethyl-8-hydroxy-5-deazariboflavin from 5-amino-5-(4-hydroxybenzyl)-6-(D-ribitylimino)-5,6-dihydrouracil. This chain is 7,8-didemethyl-8-hydroxy-5-deazariboflavin synthase, found in Methanosarcina mazei (strain ATCC BAA-159 / DSM 3647 / Goe1 / Go1 / JCM 11833 / OCM 88) (Methanosarcina frisia).